A 227-amino-acid polypeptide reads, in one-letter code: MQLCVALDLPSIEENLSLAKSLKNYDIWLKVGLRSYIRDGKEFLKQIKQINPNFHIFLDLKLYDIPNTMADAAEEIAKLGVEMFNIHASAGKEAMQSVMQRVQKFQNPPLVLAVTVLTSFNEEQFRSIYNDSIENKAKQFAKEAYEAGLDGVVCSVYESDLIKNITSDTFITLTPGIRPFGESAGDQKRVADINLAKEKKVDFIVVGRPIYQANNPAEVVEKILTNL.

Residues Asp8, Lys30, 59-68 (DLKLYDIPNT), Thr118, Arg178, Gln187, Gly207, and Arg208 each bind substrate. The active-site Proton donor is Lys61.

The protein belongs to the OMP decarboxylase family. Type 1 subfamily. In terms of assembly, homodimer.

The enzyme catalyses orotidine 5'-phosphate + H(+) = UMP + CO2. It participates in pyrimidine metabolism; UMP biosynthesis via de novo pathway; UMP from orotate: step 2/2. In terms of biological role, catalyzes the decarboxylation of orotidine 5'-monophosphate (OMP) to uridine 5'-monophosphate (UMP). The chain is Orotidine 5'-phosphate decarboxylase from Nitratiruptor sp. (strain SB155-2).